The primary structure comprises 468 residues: Trigger factor (468 aa).

The region spanning 162-243 is the PPIase FKBP-type domain; sequence GDVLTLDLQA…VSQVAARELP (82 aa). Positions 428-468 are disordered; that stretch reads NGEIVDLDDEEDEETEAAEADATEAADAEKADDKAEEKTEG. Residues 432–453 are compositionally biased toward acidic residues; that stretch reads VDLDDEEDEETEAAEADATEAA. The span at 454 to 468 shows a compositional bias: basic and acidic residues; that stretch reads DAEKADDKAEEKTEG.

It belongs to the FKBP-type PPIase family. Tig subfamily.

Its subcellular location is the cytoplasm. It carries out the reaction [protein]-peptidylproline (omega=180) = [protein]-peptidylproline (omega=0). In terms of biological role, involved in protein export. Acts as a chaperone by maintaining the newly synthesized protein in an open conformation. Functions as a peptidyl-prolyl cis-trans isomerase. The protein is Trigger factor of Streptomyces coelicolor (strain ATCC BAA-471 / A3(2) / M145).